The following is a 214-amino-acid chain: Calcineurin B homologous protein 3 (214 aa).

The N-myristoyl glycine moiety is linked to residue Gly2. In terms of domain architecture, EF-hand spans 110 to 145; sequence FRKEKLKFLFHMYDADYDGIITLQEYKNVLDELMSG. 4 residues coordinate Ca(2+): Asp123, Asp125, Asp127, and Glu134.

Belongs to the calcineurin regulatory subunit family. CHP subfamily. As to quaternary structure, monomer. Homodimer. Expressed in the bipotential gonad by E4.5 and expressed in both the testis and ovary by E5.5, but with expression higher in the testis. Expressed in the testis cords but also at low levels in the interstitium. In the ovary, expression is principally in the ovarian cortex, but also in the medulla. Also expressed in the embryonic brain, with expression highest in the region between the nasal placode and olfactory bulb. Also expressed in the embryonic heart and tail.

Its subcellular location is the nucleus. It localises to the cytoplasm. The protein localises to the membrane. The protein resides in the cell membrane. It is found in the cell projection. Its subcellular location is the lamellipodium. It localises to the ruffle membrane. In terms of biological role, functions as an integral cofactor in cell pH regulation by controlling plasma membrane-type Na(+)/H(+) exchange activity. Promotes the induction of hematopoietic stem cell differentiation toward megakaryocytic lineage. Essential for the coupling of ERK cascade activation with the expression of ETS family genes in megakaryocytic differentiation. Also involved in granulocytic differentiation in a ERK-dependent manner. Inhibits the phosphatase activity of calcineurin. This is Calcineurin B homologous protein 3 from Gallus gallus (Chicken).